The sequence spans 178 residues: ATP synthase subunit delta (178 aa).

It belongs to the ATPase delta chain family. As to quaternary structure, F-type ATPases have 2 components, F(1) - the catalytic core - and F(0) - the membrane proton channel. F(1) has five subunits: alpha(3), beta(3), gamma(1), delta(1), epsilon(1). F(0) has three main subunits: a(1), b(2) and c(10-14). The alpha and beta chains form an alternating ring which encloses part of the gamma chain. F(1) is attached to F(0) by a central stalk formed by the gamma and epsilon chains, while a peripheral stalk is formed by the delta and b chains.

Its subcellular location is the cell membrane. Functionally, f(1)F(0) ATP synthase produces ATP from ADP in the presence of a proton or sodium gradient. F-type ATPases consist of two structural domains, F(1) containing the extramembraneous catalytic core and F(0) containing the membrane proton channel, linked together by a central stalk and a peripheral stalk. During catalysis, ATP synthesis in the catalytic domain of F(1) is coupled via a rotary mechanism of the central stalk subunits to proton translocation. In terms of biological role, this protein is part of the stalk that links CF(0) to CF(1). It either transmits conformational changes from CF(0) to CF(1) or is implicated in proton conduction. The polypeptide is ATP synthase subunit delta (Streptococcus agalactiae serotype V (strain ATCC BAA-611 / 2603 V/R)).